Consider the following 493-residue polypeptide: ATP-dependent rRNA helicase RRP3 (493 aa).

Basic and acidic residues-rich tracts occupy residues 26–42 and 51–62; these read ALEN…KDSE and ERPAKKQAKDEK. The disordered stretch occupies residues 26–68; it reads ALENQKKMQAASRKDSESDSSDEEVERPAKKQAKDEKVEEPEE. A Q motif motif is present at residues 73 to 101; the sequence is ESFAQLNLVPELIQACQNLNFTKPTPIQA. The Helicase ATP-binding domain occupies 104 to 276; it reads IPPALAGSDV…RASLTNPVKC (173 aa). 117 to 124 is a binding site for ATP; that stretch reads AQTGSGKT. Residues 223–226 carry the DEAD box motif; it reads DEAD. The Helicase C-terminal domain maps to 307-453; the sequence is LLNEFIGKTV…NIILTLRDSV (147 aa). Residues 467–493 form a disordered region; the sequence is RNKEKQARGKGRRGRMMAKENMDREEK. The span at 483–493 shows a compositional bias: basic and acidic residues; it reads MAKENMDREEK.

This sequence belongs to the DEAD box helicase family. DDX47/RRP3 subfamily. Interacts with the SSU processome.

Its subcellular location is the nucleus. It catalyses the reaction ATP + H2O = ADP + phosphate + H(+). ATP-dependent rRNA helicase required for pre-ribosomal RNA processing. Involved in the maturation of the 35S-pre-rRNA and to its cleavage to mature 18S rRNA. The polypeptide is ATP-dependent rRNA helicase RRP3 (Candida glabrata (strain ATCC 2001 / BCRC 20586 / JCM 3761 / NBRC 0622 / NRRL Y-65 / CBS 138) (Yeast)).